The following is a 168-amino-acid chain: Phosphopantetheine adenylyltransferase (168 aa).

Ser9 is a substrate binding site. Residues 9-10 (SF) and His17 contribute to the ATP site. Residues Lys41, Leu73, and Arg87 each coordinate substrate. Residues 88–90 (GMR), Glu98, and 123–129 (WIYTSSS) contribute to the ATP site.

It belongs to the bacterial CoaD family. Homohexamer. The cofactor is Mg(2+).

The protein resides in the cytoplasm. The enzyme catalyses (R)-4'-phosphopantetheine + ATP + H(+) = 3'-dephospho-CoA + diphosphate. The protein operates within cofactor biosynthesis; coenzyme A biosynthesis; CoA from (R)-pantothenate: step 4/5. Functionally, reversibly transfers an adenylyl group from ATP to 4'-phosphopantetheine, yielding dephospho-CoA (dPCoA) and pyrophosphate. The chain is Phosphopantetheine adenylyltransferase from Desulfosudis oleivorans (strain DSM 6200 / JCM 39069 / Hxd3) (Desulfococcus oleovorans).